The following is a 420-amino-acid chain: Gamma-glutamyl phosphate reductase (420 aa).

It belongs to the gamma-glutamyl phosphate reductase family.

Its subcellular location is the cytoplasm. The catalysed reaction is L-glutamate 5-semialdehyde + phosphate + NADP(+) = L-glutamyl 5-phosphate + NADPH + H(+). It participates in amino-acid biosynthesis; L-proline biosynthesis; L-glutamate 5-semialdehyde from L-glutamate: step 2/2. Its function is as follows. Catalyzes the NADPH-dependent reduction of L-glutamate 5-phosphate into L-glutamate 5-semialdehyde and phosphate. The product spontaneously undergoes cyclization to form 1-pyrroline-5-carboxylate. This chain is Gamma-glutamyl phosphate reductase, found in Streptococcus pneumoniae serotype 19F (strain G54).